A 592-amino-acid polypeptide reads, in one-letter code: MSAAQSPTAQHAHAEDPVVQALFARFGQHVFVAQATHTGMPVLWLDREYLLEVLNFLRDMPEPFEMLFDLHGIDERLRSHREDLPPADFTVFYQLMSISRNRDIMLKVALSERDLEVPSVAGVYPNANWYEREVWDMFGIDFRGHPHLTRLLMPPTWNGHPLRKDYPARATEFDPYTLTVEGQSTEQEALRFDPEAWGMQRQSENTDYMFLNLGPNHPSAHGAFRIALQLDGEVVVDCVPDIGYHHRGAEKMAERQSWHSYIPYTDRIDYTGGVMNNLPYVMAVEKLAGIEVTDRAKTIRVMMAEMFRINSHLLFLGTYLQDLGAMTPVFFTFTDRQKAYEVIEGITGFRMHPAWYRIGGTAHDLPRGWDKLVQGFLDWMPKRLVEYERAMMENAIIRERTKQVAAFTTREALEWGVTGPNLRATGCDFDLRKQRPYSGYENFDFEVPLGANGDVFDRGQLRIDEMRQSLRIIQQCVDHMPAGDYKADHPLTTPPPREKMLQHIETLITHFLQVSWGPVLKPNESLSMIEATKGINSYYLTADGNTMSYRTRIRTPSFPHLQQIPAAVRGALVPDLIAHLGSIDFVMADVDR.

The interval 1-183 (MSAAQSPTAQ…DPYTLTVEGQ (183 aa)) is NADH dehydrogenase I subunit C. The tract at residues 207–592 (DYMFLNLGPN…IDFVMADVDR (386 aa)) is NADH dehydrogenase I subunit D.

This sequence in the N-terminal section; belongs to the complex I 30 kDa subunit family. In the C-terminal section; belongs to the complex I 49 kDa subunit family. NDH-1 is composed of 13 different subunits. Subunits NuoB, CD, E, F, and G constitute the peripheral sector of the complex.

Its subcellular location is the cell inner membrane. The catalysed reaction is a quinone + NADH + 5 H(+)(in) = a quinol + NAD(+) + 4 H(+)(out). Functionally, NDH-1 shuttles electrons from NADH, via FMN and iron-sulfur (Fe-S) centers, to quinones in the respiratory chain. The immediate electron acceptor for the enzyme in this species is believed to be ubiquinone. Couples the redox reaction to proton translocation (for every two electrons transferred, four hydrogen ions are translocated across the cytoplasmic membrane), and thus conserves the redox energy in a proton gradient. This is NADH-quinone oxidoreductase subunit C/D from Chromohalobacter salexigens (strain ATCC BAA-138 / DSM 3043 / CIP 106854 / NCIMB 13768 / 1H11).